The primary structure comprises 295 residues: Protease HtpX (295 aa).

Helical transmembrane passes span 4–24 (ILLF…TLSL) and 42–62 (QLLV…LFIS). Residue His-147 participates in Zn(2+) binding. Residue Glu-148 is part of the active site. His-151 lines the Zn(2+) pocket. 2 helical membrane-spanning segments follow: residues 158–178 (VTLA…ARII) and 199–219 (ITTI…VMWF). A Zn(2+)-binding site is contributed by Glu-224.

This sequence belongs to the peptidase M48B family. Zn(2+) serves as cofactor.

The protein localises to the cell inner membrane. The protein is Protease HtpX of Pseudomonas syringae pv. tomato (strain ATCC BAA-871 / DC3000).